The sequence spans 338 residues: MRASFVVTAPLLAAAVHGYAAPGACSGACNIHDPSLIRRESDGKYFRFSTGNKISYASASSIEGPWTTIGSMLPDGSSIDLPGNDDLWVSAHATWTGVPHANREYQAPDAQIVNGVYHVYYSVSSFGSQNSAIGLATSTSMDAGTWTDHGSTGIQSSSSKNYNAIDGNLFNDGGTYYMNFGSFWADIFQAPMNSAATKVASSSYGIAYDPSGTHAVEGSYLYKYGNYYYLFYSWGICCGYDTSRPAAGQEYKIKVCRSTSATGNFVDADGVACTNGGGTVVLESHDNVYGPGGQGVFTDPNLGPVLYYHYVDTNIGYADGQKLFGWNVLDFSSGWPVV.

The signal sequence occupies residues 1–20 (MRASFVVTAPLLAAAVHGYA). Asp-33 serves as the catalytic Proton acceptor. Glu-217 (proton donor) is an active-site residue.

This sequence belongs to the glycosyl hydrolase 43 family.

It is found in the secreted. The catalysed reaction is Endohydrolysis of (1-&gt;5)-alpha-arabinofuranosidic linkages in (1-&gt;5)-arabinans.. The protein operates within glycan metabolism; L-arabinan degradation. Endo-1,5-alpha-L-arabinanase involved in degradation of pectin. Its preferred substrate is linear 1,5-alpha-L-arabinan. This chain is Probable arabinan endo-1,5-alpha-L-arabinosidase A (abnA), found in Aspergillus terreus (strain NIH 2624 / FGSC A1156).